An 83-amino-acid chain; its full sequence is U5-theraphotoxin-Hs1d (83 aa).

The signal sequence occupies residues M1–A21. Positions S22–R49 are excised as a propeptide. 3 disulfides stabilise this stretch: C51–C63, C56–C68, and C62–C75.

This sequence belongs to the neurotoxin 10 (Hwtx-1) family. 51 (Hntx-8) subfamily. Hntx-8 sub-subfamily. In terms of tissue distribution, expressed by the venom gland.

It is found in the secreted. In terms of biological role, agglutinates erythrocytes. This chain is U5-theraphotoxin-Hs1d, found in Cyriopagopus schmidti (Chinese bird spider).